The sequence spans 423 residues: Acaloleptin A (423 aa).

The signal sequence occupies residues 1–17; sequence MITKISLILFAVLLVSG. Residues 18–26 constitute a propeptide that is removed on maturation; it reads LEEEERWKR. 4 disordered regions span residues 28 to 58, 108 to 128, 180 to 203, and 355 to 385; these read LQPGAPNVNNNDQPWQVSPHISRDDSGNTKT, INNKDQPWQVSPHISRDDNGN, NVNNKDQPWQVSPHISRDDSGNTR, and SDDEDEEEEEDQPWQLNPNIARGDDGNTRAD. Residues 34–43 show a composition bias toward polar residues; the sequence is NVNNNDQPWQ. A compositionally biased stretch (polar residues) spans 180–189; that stretch reads NVNNKDQPWQ. Acidic residues predominate over residues 357–366; the sequence is DEDEEEEEDQ. The segment covering 376–385 has biased composition (basic and acidic residues); sequence RGDDGNTRAD.

Belongs to the coleoptericin family. As to expression, hemolymph (at protein level). Larval fat body.

It localises to the secreted. Acaloleptins A1-A4 show antibacterial activity against Gram-negative bacteria but not against Gram-positive bacteria. Acaloleptin A5 shows antibacterial activity against Gram-positive bacteria but not against Gram-negative bacteria, and may also have antifungal activity. The chain is Acaloleptin A from Acalolepta luxuriosa (Udo longhorn beetle).